The chain runs to 38 residues: DNA binding protein VP8 (38 aa).

Over residues 1 to 16 (MKRKPMSRKASQKTFK) the composition is skewed to basic residues. The interval 1 to 38 (MKRKPMSRKASQKTFKKNTGVQRMNHLNPRAMRGGIRL) is disordered.

It belongs to the microviridae J protein family.

The protein localises to the virion. It is found in the host cytoplasm. Its function is as follows. Mediates ssDNA packaging into virion, it locates to the internal surface of the capsid, thereby displacing the internal scaffolding protein VP3 during virion formation. Additionally, protein VP8 plays a role in viral attachment to the host cell. The chain is DNA binding protein VP8 from Bdellovibrio phage phiMH2K (Bacteriophage phiMH2K).